The sequence spans 593 residues: ATP-dependent lipid A-core flippase (593 aa).

6 helical membrane-spanning segments follow: residues 33–55 (YIFL…YGFG), 67–87 (ILML…VGSF), 146–166 (AIIT…VMFV), 169–189 (WQLS…ISII), 258–278 (VIQI…AIFG), and 284–304 (GSSW…AAIL). The region spanning 38-319 (ADASMIYLIN…LTKVNVVIQK (282 aa)) is the ABC transmembrane type-1 domain. Residues 351–585 (VTIKDLSFAF…GGLYTGSINR (235 aa)) form the ABC transporter domain. 383–390 (GKSGSGKT) is an ATP binding site.

This sequence belongs to the ABC transporter superfamily. Lipid exporter (TC 3.A.1.106) family. In terms of assembly, homodimer.

It localises to the cell membrane. It carries out the reaction ATP + H2O + lipid A-core oligosaccharideSide 1 = ADP + phosphate + lipid A-core oligosaccharideSide 2.. Its function is as follows. Involved in lipopolysaccharide (LPS) biosynthesis. Translocates lipid A-core from the inner to the outer leaflet of the inner membrane. Transmembrane domains (TMD) form a pore in the inner membrane and the ATP-binding domain (NBD) is responsible for energy generation. In Francisella novicida, this protein is ATP-dependent lipid A-core flippase.